A 267-amino-acid polypeptide reads, in one-letter code: Farnesyl diphosphate phosphatase YisP (267 aa).

This sequence belongs to the phytoene/squalene synthase family. Monomer.

It catalyses the reaction (2E,6E)-farnesyl diphosphate + H2O = (2E,6E)-farnesol + diphosphate. Its activity is regulated as follows. Diphosphate release from FPP is inhibited by zaragozic acid. Its function is as follows. A farnesyl diphosphate (FPP) phosphatase. Involved in biofilm formation, its disruption blocks biofilm synthesis which is restored by exogenous farnesol. Releases diphosphate from FPP, was initally suggested to be a squalene synthase. Diphosphate release is higher from FPP than geranyl pyrophosphate (GPP) or geranylgeranyl pyrophosphate (GGPP). Biofilm synthesis is partially restored by exogenous squalene, beta-carotene or retinol. Required for integrity of cell membrane lipid rafts. Involved in spatial organization of membranes, required for the flotillin-like proteins FloT and FloA to function correctly. The chain is Farnesyl diphosphate phosphatase YisP (yisP) from Bacillus subtilis (strain 168).